Reading from the N-terminus, the 221-residue chain is Small ribosomal subunit protein uS5 (221 aa).

The S5 DRBM domain occupies 46-109 (IKDEVIDIKR…INAKLNIMEI (64 aa)).

This sequence belongs to the universal ribosomal protein uS5 family. As to quaternary structure, part of the 30S ribosomal subunit. Contacts protein S4.

Functionally, with S4 and S12 plays an important role in translational accuracy. The polypeptide is Small ribosomal subunit protein uS5 (Thermoplasma volcanium (strain ATCC 51530 / DSM 4299 / JCM 9571 / NBRC 15438 / GSS1)).